Reading from the N-terminus, the 509-residue chain is Maturase K (509 aa).

This sequence belongs to the intron maturase 2 family. MatK subfamily.

The protein localises to the plastid. The protein resides in the chloroplast. Functionally, usually encoded in the trnK tRNA gene intron. Probably assists in splicing its own and other chloroplast group II introns. The chain is Maturase K from Cicer arietinum (Chickpea).